The chain runs to 174 residues: NADH-quinone oxidoreductase subunit C (174 aa).

It belongs to the complex I 30 kDa subunit family. As to quaternary structure, NDH-1 is composed of 14 different subunits. Subunits NuoB, C, D, E, F, and G constitute the peripheral sector of the complex.

It is found in the cell membrane. The catalysed reaction is a quinone + NADH + 5 H(+)(in) = a quinol + NAD(+) + 4 H(+)(out). Functionally, NDH-1 shuttles electrons from NADH, via FMN and iron-sulfur (Fe-S) centers, to quinones in the respiratory chain. The immediate electron acceptor for the enzyme in this species is believed to be ubiquinone. Couples the redox reaction to proton translocation (for every two electrons transferred, four hydrogen ions are translocated across the cytoplasmic membrane), and thus conserves the redox energy in a proton gradient. This chain is NADH-quinone oxidoreductase subunit C, found in Roseiflexus sp. (strain RS-1).